Here is a 241-residue protein sequence, read N- to C-terminus: Adapter protein MecA (241 aa).

The segment at 77–102 is disordered; it reads KNTDEDDVADESQGDASVDSEHPDQV. Residues 80–89 are compositionally biased toward acidic residues; it reads DEDDVADESQ.

The protein belongs to the MecA family. As to quaternary structure, homodimer.

Functionally, enables the recognition and targeting of unfolded and aggregated proteins to the ClpC protease or to other proteins involved in proteolysis. This is Adapter protein MecA from Levilactobacillus brevis (strain ATCC 367 / BCRC 12310 / CIP 105137 / JCM 1170 / LMG 11437 / NCIMB 947 / NCTC 947) (Lactobacillus brevis).